We begin with the raw amino-acid sequence, 163 residues long: Ribonuclease P protein subunit p25-like protein (163 aa).

Disordered stretches follow at residues 1–24 (MEQYRRAGSVELPASSPMPQLPPD) and 126–163 (LDPSECGYQPPGAPPGLGSIPSPSCGPRPRRRARDTRS). A compositionally biased stretch (basic residues) spans 153 to 163 (RPRRRARDTRS).

The protein belongs to the histone-like Alba family.

It is found in the nucleus. May be a component of ribonuclease P or MRP. In Mus musculus (Mouse), this protein is Ribonuclease P protein subunit p25-like protein (Rpp25l).